The primary structure comprises 125 residues: Large ribosomal subunit protein bL12 (125 aa).

Belongs to the bacterial ribosomal protein bL12 family. Homodimer. Part of the ribosomal stalk of the 50S ribosomal subunit. Forms a multimeric L10(L12)X complex, where L10 forms an elongated spine to which 2 to 4 L12 dimers bind in a sequential fashion. Binds GTP-bound translation factors.

Its function is as follows. Forms part of the ribosomal stalk which helps the ribosome interact with GTP-bound translation factors. Is thus essential for accurate translation. The chain is Large ribosomal subunit protein bL12 from Liberibacter africanus (Citrus greening disease).